A 68-amino-acid polypeptide reads, in one-letter code: Protein SlyX homolog (68 aa).

This sequence belongs to the SlyX family.

The protein is Protein SlyX homolog of Pseudomonas syringae pv. syringae (strain B728a).